The chain runs to 179 residues: Adenine phosphoribosyltransferase (179 aa).

The protein belongs to the purine/pyrimidine phosphoribosyltransferase family. Homodimer.

It localises to the cytoplasm. The catalysed reaction is AMP + diphosphate = 5-phospho-alpha-D-ribose 1-diphosphate + adenine. Its pathway is purine metabolism; AMP biosynthesis via salvage pathway; AMP from adenine: step 1/1. Functionally, catalyzes a salvage reaction resulting in the formation of AMP, that is energically less costly than de novo synthesis. This is Adenine phosphoribosyltransferase from Dinoroseobacter shibae (strain DSM 16493 / NCIMB 14021 / DFL 12).